A 285-amino-acid chain; its full sequence is Ubiquinone biosynthesis protein COQ4, mitochondrial (285 aa).

Residues 1–11 (MPPTVRQGIRT) constitute a mitochondrion transit peptide. Zn(2+) contacts are provided by His-166, Asp-167, His-170, and Glu-182.

The protein belongs to the COQ4 family. As to quaternary structure, component of a multi-subunit COQ enzyme complex, composed of at least COQ3, COQ4, COQ5, COQ6, COQ7 and COQ9. Zn(2+) serves as cofactor.

The protein resides in the mitochondrion inner membrane. The catalysed reaction is a 4-hydroxy-3-methoxy-5-(all-trans-polyprenyl)benzoate + H(+) = a 2-methoxy-6-(all-trans-polyprenyl)phenol + CO2. Its pathway is cofactor biosynthesis; ubiquinone biosynthesis. Lyase that catalyzes the C1-decarboxylation of 4-hydroxy-3-methoxy-5-(all-trans-polyprenyl)benzoic acid into 2-methoxy-6-(all-trans-polyprenyl)phenol during ubiquinone biosynthesis. The sequence is that of Ubiquinone biosynthesis protein COQ4, mitochondrial from Paracoccidioides brasiliensis (strain Pb18).